Here is a 170-residue protein sequence, read N- to C-terminus: Methanogen homoaconitase small subunit (170 aa).

The YLRT motif lies at 26–29; that stretch reads YLRT.

Belongs to the LeuD family. LeuD type 2 subfamily. In terms of assembly, heterotetramer of 2 HacA and 2 HacB proteins.

It catalyses the reaction (2R)-homocitrate = (2R,3S)-homoisocitrate. The catalysed reaction is (2R)-homocitrate = cis-homoaconitate + H2O. The enzyme catalyses (2R,3S)-homoisocitrate = cis-homoaconitate + H2O. It carries out the reaction cis-(homo)2aconitate + H2O = (2R,3S)-iso(homo)2citrate. It catalyses the reaction cis-(homo)3aconitate + H2O = (2R,3S)-iso(homo)3citrate. The protein operates within organic acid metabolism; 2-oxosuberate biosynthesis. Its function is as follows. Component of a hydro-lyase with broad substrate specificity for cis-unsaturated tricarboxylic acids. Catalyzes both the reversible dehydration of (R)-homocitrate ((R)-2-hydroxybutane-1,2,4-tricarboxylate) to produce cis-homoaconitate ((Z)-but-1-ene-1,2,4-tricarboxylate), and its hydration to homoisocitrate ((1R,2S)-1-hydroxybutane-1,2,4-tricarboxylate). Is also able to hydrate the analogous longer chain substrates cis-homo(2)-aconitate, cis-homo(3)-aconitate. These reactions are part of the biosynthesis pathway of coenzyme B. The polypeptide is Methanogen homoaconitase small subunit (hacB) (Methanothermobacter thermautotrophicus (strain ATCC 29096 / DSM 1053 / JCM 10044 / NBRC 100330 / Delta H) (Methanobacterium thermoautotrophicum)).